Reading from the N-terminus, the 76-residue chain is Dermaseptin-S7 (76 aa).

Positions 1–22 (MDILKKSLFLVLFLGLISLSFC) are cleaved as a signal peptide. The propeptide occupies 23–45 (EEEKRENEDEEEQEDDEQSEEKR). Residues 25 to 45 (EKRENEDEEEQEDDEQSEEKR) form a disordered region. A compositionally biased stretch (acidic residues) spans 30–41 (EDEEEQEDDEQS). A Glutamine amide modification is found at Gln73. Residues 75–76 (EQ) constitute a propeptide that is removed on maturation.

Belongs to the frog skin active peptide (FSAP) family. Dermaseptin subfamily. In terms of tissue distribution, expressed by the skin glands.

The protein resides in the secreted. Functionally, antimicrobial peptide. The chain is Dermaseptin-S7 from Phyllomedusa sauvagei (Sauvage's leaf frog).